Reading from the N-terminus, the 101-residue chain is MGARHLLALLLVLLVLGFEVQGAQVPQQDEAANTTLLTQVQESLLSYWDSTKAAAQDLYKKTYLTTMDEKIRDMFSKSTAAVSTYVGIFTDQLLSLLKGED.

Residues 1-22 (MGARHLLALLLVLLVLGFEVQG) form the signal peptide. The segment at 66–74 (TMDEKIRDM) is lipid binding. A lipoprotein lipase cofactor region spans residues 78–101 (STAAVSTYVGIFTDQLLSLLKGED).

Belongs to the apolipoprotein C2 family. Post-translationally, proapolipoprotein C-II is synthesized as a sialic acid containing glycoprotein which is subsequently desialylated prior to its proteolytic processing. In terms of processing, proapolipoprotein C-II, the major form found in plasma undergoes proteolytic cleavage of its N-terminal hexapeptide to generate apolipoprotein C-II, which occurs as the minor form in plasma.

The protein resides in the secreted. Component of chylomicrons, very low-density lipoproteins (VLDL), low-density lipoproteins (LDL), and high-density lipoproteins (HDL) in plasma. Plays an important role in lipoprotein metabolism as an activator of lipoprotein lipase. Both proapolipoprotein C-II and apolipoprotein C-II can activate lipoprotein lipase. The chain is Apolipoprotein C-II (APOC2) from Tapirus terrestris (Lowland tapir).